A 294-amino-acid polypeptide reads, in one-letter code: UPF0761 membrane protein MADE_1017605/MADE_1018330 (294 aa).

Transmembrane regions (helical) follow at residues 45 to 65 (LLSL…FPAF), 99 to 119 (ASQM…MLIS), 141 to 161 (FAIY…SVVV), 182 to 202 (FLLS…LYMV), 213 to 233 (AFVG…GFAL), and 247 to 267 (ALAV…IVLF).

It belongs to the UPF0761 family.

Its subcellular location is the cell inner membrane. In Alteromonas mediterranea (strain DSM 17117 / CIP 110805 / LMG 28347 / Deep ecotype), this protein is UPF0761 membrane protein MADE_1017605/MADE_1018330.